A 323-amino-acid polypeptide reads, in one-letter code: Ribose-phosphate pyrophosphokinase (323 aa).

ATP contacts are provided by residues 38 to 40 (DGE) and 96 to 97 (RQ). Mg(2+) is bound by residues His-130 and Asp-170. Lys-193 is a catalytic residue. D-ribose 5-phosphate is bound by residues Arg-195, Asp-219, and 223–227 (DTAGT).

It belongs to the ribose-phosphate pyrophosphokinase family. Class I subfamily. As to quaternary structure, homohexamer. Mg(2+) serves as cofactor.

It localises to the cytoplasm. The enzyme catalyses D-ribose 5-phosphate + ATP = 5-phospho-alpha-D-ribose 1-diphosphate + AMP + H(+). It participates in metabolic intermediate biosynthesis; 5-phospho-alpha-D-ribose 1-diphosphate biosynthesis; 5-phospho-alpha-D-ribose 1-diphosphate from D-ribose 5-phosphate (route I): step 1/1. In terms of biological role, involved in the biosynthesis of the central metabolite phospho-alpha-D-ribosyl-1-pyrophosphate (PRPP) via the transfer of pyrophosphoryl group from ATP to 1-hydroxyl of ribose-5-phosphate (Rib-5-P). This is Ribose-phosphate pyrophosphokinase from Chlorobaculum tepidum (strain ATCC 49652 / DSM 12025 / NBRC 103806 / TLS) (Chlorobium tepidum).